The following is a 374-amino-acid chain: Queuine tRNA-ribosyltransferase (374 aa).

The Proton acceptor role is filled by Asp89. Substrate contacts are provided by residues 89–93, Asp143, Gln187, and Gly214; that span reads DSGGF. Residues 245–251 form an RNA binding region; that stretch reads GVGKPED. The active-site Nucleophile is the Asp264. The RNA binding; important for wobble base 34 recognition stretch occupies residues 269 to 273; the sequence is TRNAR. Zn(2+)-binding residues include Cys302, Cys304, Cys307, and His333.

Belongs to the queuine tRNA-ribosyltransferase family. In terms of assembly, homodimer. Within each dimer, one monomer is responsible for RNA recognition and catalysis, while the other monomer binds to the replacement base PreQ1. It depends on Zn(2+) as a cofactor.

It carries out the reaction 7-aminomethyl-7-carbaguanine + guanosine(34) in tRNA = 7-aminomethyl-7-carbaguanosine(34) in tRNA + guanine. It participates in tRNA modification; tRNA-queuosine biosynthesis. In terms of biological role, catalyzes the base-exchange of a guanine (G) residue with the queuine precursor 7-aminomethyl-7-deazaguanine (PreQ1) at position 34 (anticodon wobble position) in tRNAs with GU(N) anticodons (tRNA-Asp, -Asn, -His and -Tyr). Catalysis occurs through a double-displacement mechanism. The nucleophile active site attacks the C1' of nucleotide 34 to detach the guanine base from the RNA, forming a covalent enzyme-RNA intermediate. The proton acceptor active site deprotonates the incoming PreQ1, allowing a nucleophilic attack on the C1' of the ribose to form the product. After dissociation, two additional enzymatic reactions on the tRNA convert PreQ1 to queuine (Q), resulting in the hypermodified nucleoside queuosine (7-(((4,5-cis-dihydroxy-2-cyclopenten-1-yl)amino)methyl)-7-deazaguanosine). This Shewanella oneidensis (strain ATCC 700550 / JCM 31522 / CIP 106686 / LMG 19005 / NCIMB 14063 / MR-1) protein is Queuine tRNA-ribosyltransferase.